The sequence spans 295 residues: Large ribosomal subunit protein uL2 (295 aa).

Positions 243–295 (WRPHTRGTAMNPVDHPHGGGEGRTRGKHPESPWDGRRRDTRREGVRSTPISLS) are disordered. A compositionally biased stretch (basic and acidic residues) spans 256 to 287 (DHPHGGGEGRTRGKHPESPWDGRRRDTRREGV).

It belongs to the universal ribosomal protein uL2 family. In terms of assembly, part of the 50S ribosomal subunit. Forms a bridge to the 30S subunit in the 70S ribosome.

Its function is as follows. One of the primary rRNA binding proteins. Required for association of the 30S and 50S subunits to form the 70S ribosome, for tRNA binding and peptide bond formation. It has been suggested to have peptidyltransferase activity; this is somewhat controversial. Makes several contacts with the 16S rRNA in the 70S ribosome. The protein is Large ribosomal subunit protein uL2 of Aquifex pyrophilus.